A 93-amino-acid chain; its full sequence is Small ribosomal subunit protein uS19 (93 aa).

It belongs to the universal ribosomal protein uS19 family.

Protein S19 forms a complex with S13 that binds strongly to the 16S ribosomal RNA. The protein is Small ribosomal subunit protein uS19 of Mycolicibacterium paratuberculosis (strain ATCC BAA-968 / K-10) (Mycobacterium paratuberculosis).